Here is a 315-residue protein sequence, read N- to C-terminus: MLQFSTFLVLLYISISYVLPLYATSQPEGSKRDNPRTIKSRMQKLTIMLISNLFLVPFLQSQLSSTTSHISFKDAFLGLGIIPGYYAALPNPWQFSQFVKDLTKCVAMLLTLYCGPVLDFVLYHLLNPKSSILEDFYHEFLNIWSFRNFIFAPITEEIFYTSMLLTTYLNLIPHSQLSYQQLFWQPSLFFGLAHAHHAYEQLQEGSMTTVSILLTTCFQILYTTLFGGLTKFVFVRTGGNLWCCIILHALCNIMGFPGPSRLNLHFTVVDKKAGRISKLVSIWNKCYFALLVLGLISLKDTLQTLVGTPGYRITL.

Topologically, residues 1 to 3 (MLQ) are lumenal. The chain crosses the membrane as a helical span at residues 4–23 (FSTFLVLLYISISYVLPLYA). The Cytoplasmic segment spans residues 24-44 (TSQPEGSKRDNPRTIKSRMQK). The helical transmembrane segment at 45-65 (LTIMLISNLFLVPFLQSQLSS) threads the bilayer. Residues 66–74 (TTSHISFKD) lie on the Lumenal side of the membrane. The helical transmembrane segment at 75–95 (AFLGLGIIPGYYAALPNPWQF) threads the bilayer. At 96 to 105 (SQFVKDLTKC) the chain is on the cytoplasmic side. A helical transmembrane segment spans residues 106–126 (VAMLLTLYCGPVLDFVLYHLL). The Lumenal segment spans residues 127–148 (NPKSSILEDFYHEFLNIWSFRN). A helical transmembrane segment spans residues 149 to 169 (FIFAPITEEIFYTSMLLTTYL). Active-site proton donor/acceptor residues include Glu156 and His194. The Cytoplasmic segment spans residues 170–208 (NLIPHSQLSYQQLFWQPSLFFGLAHAHHAYEQLQEGSMT). The chain crosses the membrane as a helical span at residues 209–229 (TVSILLTTCFQILYTTLFGGL). Topologically, residues 230–237 (TKFVFVRT) are lumenal. The chain crosses the membrane as a helical span at residues 238-258 (GGNLWCCIILHALCNIMGFPG). The Cytoplasmic portion of the chain corresponds to 259 to 275 (PSRLNLHFTVVDKKAGR). The helical transmembrane segment at 276–296 (ISKLVSIWNKCYFALLVLGLI) threads the bilayer. Residues 297–315 (SLKDTLQTLVGTPGYRITL) lie on the Lumenal side of the membrane.

Belongs to the peptidase U48 family.

Its subcellular location is the endoplasmic reticulum membrane. It carries out the reaction Hydrolyzes the peptide bond -P2-(S-farnesyl or geranylgeranyl)C-P1'-P2'-P3'-COOH where P1' and P2' are amino acids with aliphatic sidechains and P3' is any C-terminal residue.. Functionally, protease involved in the processing of a variety of prenylated proteins containing the C-terminal CAAX motif, where C is a cysteine modified with an isoprenoid lipid, A is an aliphatic amino acid and X is any C-terminal amino acid. Proteolytically removes the C-terminal three residues of farnesylated proteins, leaving the prenylated cysteine as the new C-terminus. Target proteins include the a-factor mating pheromone and RAS. Its substrate specificity is overlapping but distinct with that of STE24. This is CAAX prenyl protease 2 (RCE1) from Saccharomyces cerevisiae (strain ATCC 204508 / S288c) (Baker's yeast).